Consider the following 696-residue polypeptide: Interleukin-1 receptor accessory protein-like 1 (696 aa).

The signal sequence occupies residues 1–18 (MKAPIPHLILLYATFTQS). An Ig-like 1 domain is found at 19 to 134 (LKVVTKRGSA…YCMKVSISLT (116 aa)). Topologically, residues 19-357 (LKVVTKRGSA…LLHKRELMYT (339 aa)) are extracellular. 2 cysteine pairs are disulfide-bonded: Cys-31-Cys-126 and Cys-53-Cys-118. Asn-63, Asn-122, and Asn-138 each carry an N-linked (GlcNAc...) asparagine glycan. Disulfide bonds link Cys-143/Cys-185 and Cys-164/Cys-216. Ig-like domains are found at residues 143-232 (CYNS…TELT) and 242-350 (PKLL…VLLH). Asn-213, Asn-264, and Asn-331 each carry an N-linked (GlcNAc...) asparagine glycan. Residues Cys-267 and Cys-334 are joined by a disulfide bond. A helical membrane pass occupies residues 358 to 378 (VELAGGLGAILLLLVCLVTIY). Residues 379-696 (KCYKIEIMLF…RETSISSVIW (318 aa)) are Cytoplasmic-facing. Positions 403–559 (KDYDAYLSYT…KFWKRLQYEM (157 aa)) constitute a TIR domain. Glu-491 is a catalytic residue. The segment at 549 to 644 (SKFWKRLQYE…TGTLPLTSIG (96 aa)) is interaction with NCS1. Residues 659-680 (GQRPQTKSSREQNPDEAHTNSA) form a disordered region. Basic and acidic residues predominate over residues 666–676 (SSREQNPDEAH).

This sequence belongs to the interleukin-1 receptor family. Homodimer. Interacts (calcium-independent) with NCS1/FREQ. Interacts (via the first immunoglobilin domain) with PTPRD (via the second immunoglobilin domain); this interaction is PTPRD-splicing-dependent and induces pre- and post-synaptic differentiation of neurons and is required for IL1RAPL1-mediated synapse formation.

It localises to the cell membrane. The protein resides in the cytoplasm. Its subcellular location is the cell projection. The protein localises to the axon. It is found in the dendrite. It carries out the reaction NAD(+) + H2O = ADP-D-ribose + nicotinamide + H(+). Its function is as follows. May regulate secretion and presynaptic differentiation through inhibition of the activity of N-type voltage-gated calcium channel. May activate the MAP kinase JNK. Plays a role in neurite outgrowth. During dendritic spine formation can bidirectionally induce pre- and post-synaptic differentiation of neurons by trans-synaptically binding to PTPRD. The protein is Interleukin-1 receptor accessory protein-like 1 (IL1RAPL1) of Pongo pygmaeus (Bornean orangutan).